The sequence spans 109 residues: Large ribosomal subunit protein uL24 (109 aa).

This sequence belongs to the universal ribosomal protein uL24 family. In terms of assembly, part of the 50S ribosomal subunit.

One of two assembly initiator proteins, it binds directly to the 5'-end of the 23S rRNA, where it nucleates assembly of the 50S subunit. Functionally, one of the proteins that surrounds the polypeptide exit tunnel on the outside of the subunit. The chain is Large ribosomal subunit protein uL24 from Legionella pneumophila (strain Paris).